Reading from the N-terminus, the 228-residue chain is Ribose-5-phosphate isomerase A (228 aa).

Residues 27-30 (TGTT), 86-89 (DGAD), and 100-103 (KGMG) each bind substrate. Catalysis depends on Glu-109, which acts as the Proton acceptor. Lys-127 lines the substrate pocket.

Belongs to the ribose 5-phosphate isomerase family. As to quaternary structure, homodimer.

It catalyses the reaction aldehydo-D-ribose 5-phosphate = D-ribulose 5-phosphate. It participates in carbohydrate degradation; pentose phosphate pathway; D-ribose 5-phosphate from D-ribulose 5-phosphate (non-oxidative stage): step 1/1. Catalyzes the reversible conversion of ribose-5-phosphate to ribulose 5-phosphate. The sequence is that of Ribose-5-phosphate isomerase A from Borreliella afzelii (strain PKo) (Borrelia afzelii).